Consider the following 260-residue polypeptide: Cytochrome c oxidase subunit 3 (260 aa).

6 consecutive transmembrane segments (helical) span residues 41–61 (LTLV…RDII), 81–101 (GMIL…WAFF), 133–153 (TGVL…ILAG), 161–181 (ALFL…WEYI), 196–216 (FFVA…FLMV), and 238–258 (AWYW…IYWW).

The protein belongs to the cytochrome c oxidase subunit 3 family. As to quaternary structure, component of the cytochrome c oxidase (complex IV, CIV), a multisubunit enzyme composed of a catalytic core of 3 subunits and several supernumerary subunits. The complex exists as a monomer or a dimer and forms supercomplexes (SCs) in the inner mitochondrial membrane with ubiquinol-cytochrome c oxidoreductase (cytochrome b-c1 complex, complex III, CIII).

Its subcellular location is the mitochondrion inner membrane. It catalyses the reaction 4 Fe(II)-[cytochrome c] + O2 + 8 H(+)(in) = 4 Fe(III)-[cytochrome c] + 2 H2O + 4 H(+)(out). Its function is as follows. Component of the cytochrome c oxidase, the last enzyme in the mitochondrial electron transport chain which drives oxidative phosphorylation. The respiratory chain contains 3 multisubunit complexes succinate dehydrogenase (complex II, CII), ubiquinol-cytochrome c oxidoreductase (cytochrome b-c1 complex, complex III, CIII) and cytochrome c oxidase (complex IV, CIV), that cooperate to transfer electrons derived from NADH and succinate to molecular oxygen, creating an electrochemical gradient over the inner membrane that drives transmembrane transport and the ATP synthase. Cytochrome c oxidase is the component of the respiratory chain that catalyzes the reduction of oxygen to water. Electrons originating from reduced cytochrome c in the intermembrane space (IMS) are transferred via the dinuclear copper A center (CU(A)) of subunit 2 and heme A of subunit 1 to the active site in subunit 1, a binuclear center (BNC) formed by heme A3 and copper B (CU(B)). The BNC reduces molecular oxygen to 2 water molecules using 4 electrons from cytochrome c in the IMS and 4 protons from the mitochondrial matrix. This is Cytochrome c oxidase subunit 3 (COIII) from Strongylocentrotus purpuratus (Purple sea urchin).